A 91-amino-acid polypeptide reads, in one-letter code: Small ribosomal subunit protein bS20 (91 aa).

Basic and acidic residues predominate over residues 1–18; it reads MPLHKSAEKRLRQSEKRN. Residues 1 to 24 are disordered; the sequence is MPLHKSAEKRLRQSEKRNVRNRAR.

This sequence belongs to the bacterial ribosomal protein bS20 family.

Its function is as follows. Binds directly to 16S ribosomal RNA. This is Small ribosomal subunit protein bS20 from Chlorobium phaeobacteroides (strain DSM 266 / SMG 266 / 2430).